A 211-amino-acid chain; its full sequence is Small ribosomal subunit protein uS4 (211 aa).

Residues Arg-98 to Leu-161 form the S4 RNA-binding domain.

Belongs to the universal ribosomal protein uS4 family. As to quaternary structure, part of the 30S ribosomal subunit. Contacts protein S5. The interaction surface between S4 and S5 is involved in control of translational fidelity.

Functionally, one of the primary rRNA binding proteins, it binds directly to 16S rRNA where it nucleates assembly of the body of the 30S subunit. Its function is as follows. With S5 and S12 plays an important role in translational accuracy. The chain is Small ribosomal subunit protein uS4 from Aquifex aeolicus (strain VF5).